The chain runs to 651 residues: Beta-glucuronidase (651 aa).

The signal sequence occupies residues 1–22 (MARGSAVAWAAFGPLLWGCALG). Asn-173, Asn-190, Asn-272, and Asn-420 each carry an N-linked (GlcNAc...) asparagine glycan. The active-site Proton donor is Glu-451. The N-linked (GlcNAc...) asparagine glycan is linked to Asn-631.

This sequence belongs to the glycosyl hydrolase 2 family. In terms of assembly, homotetramer.

The protein resides in the lysosome. The enzyme catalyses a beta-D-glucuronoside + H2O = D-glucuronate + an alcohol. Inhibited by L-aspartic acid. Its function is as follows. Plays an important role in the degradation of dermatan and keratan sulfates. The protein is Beta-glucuronidase (GUSB) of Pongo abelii (Sumatran orangutan).